A 381-amino-acid chain; its full sequence is MFTNNFSQKQILGVSKDASESEIRKAYRQLTKQWHPDKNPGNEEAQEKFIEINKAHEVLSDPEQRKIYDAYGEEGLNGQPGGPGGGPGEGFPGGGFGFDPFGDIFDNIFGGRRRQNAVRRGPSMEQIVQIHLSSFYTGGSFTLEIPVKRTCSVCSGQGFNPKYSADKAIESCPVCGGSGFRVIEHMIAPGFRQQMRMPCNACNGNGRTIKHKCPRCKGERVAEVVESFDIKVPAGAPEGYRIGFRGKADEIPGMEAGDIIVILEAAGGDYGWTRKDNDLYRKETISVREALLGNWKRKIQKLDGSFMEVKRSAGEVVHPGETERVKNQGMPIYNLHKGKTTSAHGSAYIEWEVKFPKKLKGKFLKDLNNLFEKYDNEFDEL.

In terms of domain architecture, J spans 5-74; that stretch reads NFSQKQILGV…RKIYDAYGEE (70 aa). The disordered stretch occupies residues 72-93; it reads GEEGLNGQPGGPGGGPGEGFPG. Positions 78 to 93 are enriched in gly residues; the sequence is GQPGGPGGGPGEGFPG. The CR-type zinc finger occupies 138 to 225; sequence GGSFTLEIPV…CKGERVAEVV (88 aa). CXXCXGXG motif repeat units lie at residues 151 to 158, 172 to 179, 199 to 206, and 213 to 220; these read CSVCSGQG, CPVCGGSG, CNACNGNG, and CPRCKGER. The Prevents secretion from ER signature appears at 378–381; sequence FDEL.

The protein localises to the endoplasmic reticulum. This chain is DnaJ-related protein spj1 (spj1), found in Schizosaccharomyces pombe (strain 972 / ATCC 24843) (Fission yeast).